A 185-amino-acid chain; its full sequence is Ribosome-recycling factor (185 aa).

It belongs to the RRF family.

The protein resides in the cytoplasm. Functionally, responsible for the release of ribosomes from messenger RNA at the termination of protein biosynthesis. May increase the efficiency of translation by recycling ribosomes from one round of translation to another. The protein is Ribosome-recycling factor of Shewanella piezotolerans (strain WP3 / JCM 13877).